The chain runs to 544 residues: Lipid II flippase MurJ (544 aa).

A run of 14 helical transmembrane segments spans residues 21-41 (ILGM…GGAL), 49-69 (YTLF…KFVS), 90-110 (VMLV…PMFA), 127-147 (VVYV…MSLV), 169-189 (IVRI…FNGG), 191-211 (VIAV…GLVV), 241-261 (MFFE…AIPL), 297-317 (LVMI…PTIT), 338-358 (TILF…GPTY), 375-395 (ILLW…NAAI), 404-424 (FAVV…VPLI), 431-451 (GAIL…FIMI), 471-491 (VLSA…GFFI), and 500-520 (AAIV…YCGY).

This sequence belongs to the polysaccharide synthase family.

It localises to the cell membrane. It participates in cell wall biogenesis; peptidoglycan biosynthesis. Its function is as follows. Involved in peptidoglycan biosynthesis. Transports lipid-linked peptidoglycan precursors from the inner to the outer leaflet of the cytoplasmic membrane. Not essential for growth. This Bacillus subtilis (strain 168) protein is Lipid II flippase MurJ.